The sequence spans 144 residues: Large ribosomal subunit protein uL15 (144 aa).

The tract at residues 1-52 (MRLNTLSPAEGAKHAPKRVGRGIGSGLGKTGGRGHKGQKSRSGGGVRRGFEG) is disordered. Residues 21-31 (RGIGSGLGKTG) show a composition bias toward gly residues.

This sequence belongs to the universal ribosomal protein uL15 family. As to quaternary structure, part of the 50S ribosomal subunit.

In terms of biological role, binds to the 23S rRNA. The protein is Large ribosomal subunit protein uL15 of Buchnera aphidicola subsp. Acyrthosiphon kondoi (Acyrthosiphon kondoi symbiotic bacterium).